The primary structure comprises 110 residues: MRYLKYKRYIMDSIDSRDLLDLVKYPIITDKTTKLLEENQYCFAVDPNATKINIKAAIQYIFNVQVTGVNTCHPPKKKRSIGRFIGKRPHYKKAIITLASKDSINLFPET.

It belongs to the universal ribosomal protein uL23 family. In terms of assembly, part of the 50S ribosomal subunit.

Its subcellular location is the plastid. The protein resides in the chloroplast. In terms of biological role, binds to 23S rRNA. The sequence is that of Large ribosomal subunit protein uL23c (rpl23) from Porphyra purpurea (Red seaweed).